The following is a 303-amino-acid chain: Ribonuclease HIII (303 aa).

The RNase H type-2 domain maps to cysteine 85–lysine 302. The a divalent metal cation site is built by aspartate 91, glutamate 92, and aspartate 196.

The protein belongs to the RNase HII family. RnhC subfamily. It depends on Mn(2+) as a cofactor. Requires Mg(2+) as cofactor.

The protein localises to the cytoplasm. The catalysed reaction is Endonucleolytic cleavage to 5'-phosphomonoester.. Its function is as follows. Endonuclease that specifically degrades the RNA of RNA-DNA hybrids. The polypeptide is Ribonuclease HIII (Streptococcus mutans serotype c (strain ATCC 700610 / UA159)).